The chain runs to 215 residues: Urease accessory protein UreG (215 aa).

Residue 24-31 coordinates GTP; that stretch reads GPVGSGKT.

The protein belongs to the SIMIBI class G3E GTPase family. UreG subfamily. Homodimer. UreD, UreF and UreG form a complex that acts as a GTP-hydrolysis-dependent molecular chaperone, activating the urease apoprotein by helping to assemble the nickel containing metallocenter of UreC. The UreE protein probably delivers the nickel.

It localises to the cytoplasm. In terms of biological role, facilitates the functional incorporation of the urease nickel metallocenter. This process requires GTP hydrolysis, probably effectuated by UreG. In Burkholderia cenocepacia (strain HI2424), this protein is Urease accessory protein UreG.